Reading from the N-terminus, the 455-residue chain is Alcohol acyl transferase 1 allele GSb (455 aa).

Catalysis depends on proton acceptor residues His-164 and Asn-385.

The protein belongs to the plant acyltransferase family. Expressed at very low levels in the skin of ripe fruit.

Its function is as follows. Involved in the biosynthesis of volatile esters which confer ripe apple fruit flavor. Alcohol acyl transferase that can use a wide range of alcohols as substrate to produce esters. This chain is Alcohol acyl transferase 1 allele GSb, found in Malus domestica (Apple).